Consider the following 490-residue polypeptide: Cyclin-A2-1 (490 aa).

The interval 34–76 (FAPSVSLPARTERKQTAKGKTKRGALDEITSASTATSAPQPKR) is disordered. Residues 63–72 (TSASTATSAP) show a composition bias toward polar residues.

The protein belongs to the cyclin family. Cyclin AB subfamily.

This chain is Cyclin-A2-1 (CYCA2-1), found in Oryza sativa subsp. japonica (Rice).